Here is a 510-residue protein sequence, read N- to C-terminus: Hyaluronidase PH-20 (510 aa).

The signal sequence occupies residues 1–35 (MGVLKFKHIFFRSFVKSSGVSQIVFTFLLIPCCLT). Intrachain disulfides connect Cys60–Cys351 and Cys224–Cys238. N-linked (GlcNAc...) asparagine glycosylation is present at Asn82. Residue Glu148 is the Proton donor of the active site. N-linked (GlcNAc...) asparagine glycans are attached at residues Asn166, Asn235, Asn254, and Asn368. Disulfide bonds link Cys376–Cys387, Cys381–Cys435, and Cys437–Cys464. Asn393, Asn440, and Asn484 each carry an N-linked (GlcNAc...) asparagine glycan. Ser491 is lipidated: GPI-anchor amidated serine. Positions 492 to 510 (TTMFIVNILFLIISSVASL) are cleaved as a propeptide — removed in mature form.

This sequence belongs to the glycosyl hydrolase 56 family. Testis.

The protein resides in the cell membrane. The catalysed reaction is Random hydrolysis of (1-&gt;4)-linkages between N-acetyl-beta-D-glucosamine and D-glucuronate residues in hyaluronate.. In terms of biological role, involved in sperm-egg adhesion. Upon fertilization sperm must first penetrate a layer of cumulus cells that surrounds the egg before reaching the zona pellucida. The cumulus cells are embedded in a matrix containing hyaluronic acid which is formed prior to ovulation. This protein aids in penetrating the layer of cumulus cells by digesting hyaluronic acid. This is Hyaluronidase PH-20 (SPAM1) from Macaca fascicularis (Crab-eating macaque).